Reading from the N-terminus, the 304-residue chain is Peptidyl-prolyl cis-trans isomerase FKBP35 (304 aa).

A PPIase FKBP-type domain is found at 37–126; sequence GNEVTVHYVG…LFEIELLSFR (90 aa). TPR repeat units lie at residues 144 to 177, 194 to 227, and 228 to 261; these read AFDIKEEGNEFFKKNEINEAIVKYKEALDFFIHT, ISCNLNLATCYNKNKDYPKAIDHASKVLKIDKNN, and VKALYKLGVANMYFGFLEEAKENLYKAASLNPNN.

The protein belongs to the FKBP-type PPIase family. As to quaternary structure, homodimer. Interacts (via TPR repeats) with HSP90 (probably via MEEVD motif).

The protein resides in the cytoplasm. The protein localises to the nucleus. It catalyses the reaction [protein]-peptidylproline (omega=180) = [protein]-peptidylproline (omega=0). Inhibited by FK506 and its derivates, such as ascomycin, and rapamycin. FK506 and rapamycin inhibit peptidylprolyl isomerase activity but not chaperone activity. Inhibited by N-(2-ethyl-phenyl)-2-(3H-imidazao [4, 5-b] pyridin-2-yl-sulfanyl)-acetamide (D44). Not inhibited by cyclosporin A. Inhibition of calcineurin phosphatase activity is enhanced by FK506. Functionally, has peptidylprolyl isomerase (PPIase) and co-chaperone activities. Assists protein folding by catalyzing the peptidyl conversion of cis and trans rotamers of the prolyl amide bond of protein substrates. Inhibits calcineurin phosphatase activity in vitro. Plays an essential role in merozoite egress from host erythrocytes. The chain is Peptidyl-prolyl cis-trans isomerase FKBP35 from Plasmodium falciparum (isolate 3D7).